The primary structure comprises 37 residues: Cytochrome b6-f complex subunit 7 (37 aa).

A helical membrane pass occupies residues 11–29 (AILSIVLVLVGLAWGFLLL).

The protein belongs to the PetM family. In terms of assembly, the 4 large subunits of the cytochrome b6-f complex are cytochrome b6, subunit IV (17 kDa polypeptide, PetD), cytochrome f and the Rieske protein, while the 4 small subunits are PetG, PetL, PetM and PetN. The complex functions as a dimer.

The protein localises to the cellular thylakoid membrane. Its function is as follows. Component of the cytochrome b6-f complex, which mediates electron transfer between photosystem II (PSII) and photosystem I (PSI), cyclic electron flow around PSI, and state transitions. This Gloeothece citriformis (strain PCC 7424) (Cyanothece sp. (strain PCC 7424)) protein is Cytochrome b6-f complex subunit 7.